A 76-amino-acid polypeptide reads, in one-letter code: Protein RALF-like 30 (76 aa).

Positions 1–22 are cleaved as a signal peptide; the sequence is MKAWVICLMVISIFMMIEPTLA. 2 disulfide bridges follow: Cys-37–Cys-46 and Cys-66–Cys-72.

The protein belongs to the plant rapid alkalinization factor (RALF) family.

The protein localises to the secreted. In terms of biological role, cell signaling peptide that may regulate plant stress, growth, and development. Mediates a rapid alkalinization of extracellular space by mediating a transient increase in the cytoplasmic Ca(2+) concentration leading to a calcium-dependent signaling events through a cell surface receptor and a concomitant activation of some intracellular mitogen-activated protein kinases. The protein is Protein RALF-like 30 (RALFL30) of Arabidopsis thaliana (Mouse-ear cress).